The primary structure comprises 672 residues: DNA ligase (672 aa).

NAD(+)-binding positions include Asp-37 to Asp-41, Ser-86 to Leu-87, and Glu-115. Lys-117 serves as the catalytic N6-AMP-lysine intermediate. NAD(+) is bound by residues Arg-138, Glu-172, Lys-288, and Lys-312. Zn(2+) is bound by residues Cys-406, Cys-409, Cys-424, and Cys-429. The BRCT domain occupies Asp-590–Val-672.

The protein belongs to the NAD-dependent DNA ligase family. LigA subfamily. It depends on Mg(2+) as a cofactor. The cofactor is Mn(2+).

The enzyme catalyses NAD(+) + (deoxyribonucleotide)n-3'-hydroxyl + 5'-phospho-(deoxyribonucleotide)m = (deoxyribonucleotide)n+m + AMP + beta-nicotinamide D-nucleotide.. DNA ligase that catalyzes the formation of phosphodiester linkages between 5'-phosphoryl and 3'-hydroxyl groups in double-stranded DNA using NAD as a coenzyme and as the energy source for the reaction. It is essential for DNA replication and repair of damaged DNA. The sequence is that of DNA ligase from Anoxybacillus flavithermus (strain DSM 21510 / WK1).